We begin with the raw amino-acid sequence, 198 residues long: Imidazoleglycerol-phosphate dehydratase (198 aa).

Belongs to the imidazoleglycerol-phosphate dehydratase family.

Its subcellular location is the cytoplasm. It carries out the reaction D-erythro-1-(imidazol-4-yl)glycerol 3-phosphate = 3-(imidazol-4-yl)-2-oxopropyl phosphate + H2O. It functions in the pathway amino-acid biosynthesis; L-histidine biosynthesis; L-histidine from 5-phospho-alpha-D-ribose 1-diphosphate: step 6/9. This Gluconobacter oxydans (strain 621H) (Gluconobacter suboxydans) protein is Imidazoleglycerol-phosphate dehydratase.